We begin with the raw amino-acid sequence, 1179 residues long: MVYSDTKTSKKIKKYKINIMKKKLNIFQIPLKGIHLIEASAGTGKTSTIAFLYLRLLLGLEKNKENIRKLSVKEILVVTFTNAAKEELYIRIKKSIKELHLSCIKKKSKDPIFQSFLTKIKNFDEAIHILEDAKININNAAIYTIHGFCQDVLENNTLISNREIIENESFLYLQATQDFWRYFFYNLPKKIIKIIYEEYRSPEDLLREIKPILKVNSSINFKKKFDKKETLITFHEKIINKINIFKQKWLNYNLIILKIINQLKVNKKIYSNFNILKWKKKITEWAESETKNYKMPICLKYFSETSIEKNIKNYNFKKHIFFEEIDKILKKNFSLKNIILFYAIKNIPKFVKREKEKKLLLGFNDLLKILLKNIKKEESLREIIIKQYPVALIDEFQDTNIQQYQIFNTLYKNKKTALFLVGDPKQSIYSFRGADIFSYLHAKFKIKNYYYLDTNWRSSKNICKAINYLFSKNKNPFYFKNIPFEPILSSSKNLNMKFKIKEKNQTAISFFFQKKEEVNIEEYRDWIAKQCANEISYWLTCSKKGEAIISDGSQERILTEKDIVILVRNRTEAQIIKESLKKVNILSKYSSPYESVFKTFDALELLSILKSILDPTDINLLKKSILTHILNKIAFQKIKENSKTKISHFLIQKLYEYNDKWKTIGIFYTIKTMILEYQKYANNFEMYKNQQRNINFLHIAELLQEKSQNCYKENSLMRWFEKKILEKNNISENEYIKNFAESKIIRIITIHKSKGLEYPIVWIPFIVDFNVSKSYFYHEKKTLKIFFDNNKSSETLKKSDEERLAEDLRFLYVALTRSIYHCSIGISYLVKKRKKNKKSSDIHKSSLGYIIQNGKCMNYKELLYELKILNKKLYIEVKYQAMNCKSLTIKKDDLYILSQPQFLLKEIKLYSQITSFTKIKQENKHFNNIQYNNIESYFFKEKDKKKTIHNFPHGNKAGIFIHYILKTIKFNNTFNIDWFYTILKKYEFSEKWAKTLMFWINNILNFKINNLNITLSSLKKTQYIKELEFFLPIKNTLYCEDLNQIIQSIDLISSISQKIFFNPVIGILKGFIDLVFIFNKKYYILDYKCNYLGNNDNCYSSKNIKKEIIKNRYDIQYQLYTLALHQYLKKKVKQYHYKTHFGGVFYLFLRGINVKDSIFYILPDYLLIKKLTKLILQKK.

Residues 1–859 form a DNA-binding and helicase activity, interacts with RecC region; it reads MVYSDTKTSK…IIQNGKCMNY (859 aa). A UvrD-like helicase ATP-binding domain is found at 18-459; the sequence is NIMKKKLNIF…YYLDTNWRSS (442 aa). 39 to 46 provides a ligand contact to ATP; sequence ASAGTGKT. Residues 485 to 755 form the UvrD-like helicase C-terminal domain; the sequence is EPILSSSKNL…RIITIHKSKG (271 aa). Residues 910–1179 are nuclease activity, interacts with RecD and RecA; the sequence is YSQITSFTKI…KLTKLILQKK (270 aa). Residues His-962, Asp-1073, and Asp-1086 each coordinate Mg(2+). Asp-1086 serves as the catalytic For nuclease activity.

The protein belongs to the helicase family. UvrD subfamily. As to quaternary structure, heterotrimer of RecB, RecC and RecD. All subunits contribute to DNA-binding. Interacts with RecA. Requires Mg(2+) as cofactor.

The catalysed reaction is Exonucleolytic cleavage (in the presence of ATP) in either 5'- to 3'- or 3'- to 5'-direction to yield 5'-phosphooligonucleotides.. It catalyses the reaction Couples ATP hydrolysis with the unwinding of duplex DNA by translocating in the 3'-5' direction.. It carries out the reaction ATP + H2O = ADP + phosphate + H(+). In terms of biological role, a helicase/nuclease that prepares dsDNA breaks (DSB) for recombinational DNA repair. Binds to DSBs and unwinds DNA via a highly rapid and processive ATP-dependent bidirectional helicase activity. Unwinds dsDNA until it encounters a Chi (crossover hotspot instigator) sequence from the 3' direction. Cuts ssDNA a few nucleotides 3' to the Chi site. The properties and activities of the enzyme are changed at Chi. The Chi-altered holoenzyme produces a long 3'-ssDNA overhang and facilitates RecA-binding to the ssDNA for homologous DNA recombination and repair. Holoenzyme degrades any linearized DNA that is unable to undergo homologous recombination. In the holoenzyme this subunit contributes ATPase, 3'-5' helicase, exonuclease activity and loads RecA onto ssDNA. In Buchnera aphidicola subsp. Schizaphis graminum (strain Sg), this protein is RecBCD enzyme subunit RecB.